A 199-amino-acid polypeptide reads, in one-letter code: Prefoldin subunit 3 (199 aa).

Met-1 carries the N-acetylmethionine modification.

The protein belongs to the prefoldin subunit alpha family. Heterohexamer of two PFD-alpha type and four PFD-beta type subunits.

Binds specifically to cytosolic chaperonin (c-CPN) and transfers target proteins to it. Binds to nascent polypeptide chain and promotes folding in an environment in which there are many competing pathways for nonnative proteins. This chain is Prefoldin subunit 3 (PAC10), found in Saccharomyces cerevisiae (strain ATCC 204508 / S288c) (Baker's yeast).